A 334-amino-acid polypeptide reads, in one-letter code: S-adenosylmethionine decarboxylase proenzyme 1 (334 aa).

Phenylalanine 7 lines the substrate pocket. Residues glutamate 8 and glutamate 11 contribute to the active site. Glutamate 67 contributes to the substrate binding site. The active-site Schiff-base intermediate with substrate; via pyruvic acid is serine 68. Serine 68 carries the post-translational modification Pyruvic acid (Ser); by autocatalysis. Catalysis depends on cysteine 82, which acts as the Proton donor; for catalytic activity. Position 223 (phenylalanine 223) interacts with substrate. Residues serine 229 and histidine 243 each act as proton acceptor; for processing activity in the active site. Glutamate 247 contacts substrate. Serine 298 carries the phosphoserine modification.

It belongs to the eukaryotic AdoMetDC family. In terms of assembly, heterotetramer of two alpha and two beta chains. Requires pyruvate as cofactor. Is synthesized initially as an inactive proenzyme. Formation of the active enzyme involves a self-maturation process in which the active site pyruvoyl group is generated from an internal serine residue via an autocatalytic post-translational modification. Two non-identical subunits are generated from the proenzyme in this reaction, and the pyruvate is formed at the N-terminus of the alpha chain, which is derived from the carboxyl end of the proenzyme. The post-translation cleavage follows an unusual pathway, termed non-hydrolytic serinolysis, in which the side chain hydroxyl group of the serine supplies its oxygen atom to form the C-terminus of the beta chain, while the remainder of the serine residue undergoes an oxidative deamination to produce ammonia and the pyruvoyl group blocking the N-terminus of the alpha chain. As to expression, expressed in embryonic stem cells; subsequently down-regulated in differentiating neural precursor cells.

The enzyme catalyses S-adenosyl-L-methionine + H(+) = S-adenosyl 3-(methylsulfanyl)propylamine + CO2. Its pathway is amine and polyamine biosynthesis; S-adenosylmethioninamine biosynthesis; S-adenosylmethioninamine from S-adenosyl-L-methionine: step 1/1. In terms of biological role, essential for biosynthesis of the polyamines spermidine and spermine. Promotes maintenance and self-renewal of embryonic stem cells, by maintaining spermine levels. This is S-adenosylmethionine decarboxylase proenzyme 1 (Amd1) from Mus musculus (Mouse).